We begin with the raw amino-acid sequence, 907 residues long: Protein translocase subunit SecA (907 aa).

ATP-binding positions include Gln86, 104–108, and Asp511; that span reads GEGKT. 2 stretches are compositionally biased toward basic and acidic residues: residues 838–856 and 869–888; these read AQEE…HESV and EEAP…KRND. The segment at 838 to 907 is disordered; the sequence is AQEEWKESMS…YKQCHGKVVD (70 aa). Cys890, Cys892, Cys901, and His902 together coordinate Zn(2+). The span at 896–907 shows a compositional bias: basic residues; the sequence is KKYKQCHGKVVD.

The protein belongs to the SecA family. As to quaternary structure, monomer and homodimer. Part of the essential Sec protein translocation apparatus which comprises SecA, SecYEG and auxiliary proteins SecDF-YajC and YidC. The cofactor is Zn(2+).

It is found in the cell inner membrane. The protein resides in the cytoplasm. It catalyses the reaction ATP + H2O + cellular proteinSide 1 = ADP + phosphate + cellular proteinSide 2.. Its function is as follows. Part of the Sec protein translocase complex. Interacts with the SecYEG preprotein conducting channel. Has a central role in coupling the hydrolysis of ATP to the transfer of proteins into and across the cell membrane, serving both as a receptor for the preprotein-SecB complex and as an ATP-driven molecular motor driving the stepwise translocation of polypeptide chains across the membrane. This is Protein translocase subunit SecA from Francisella philomiragia subsp. philomiragia (strain ATCC 25017 / CCUG 19701 / FSC 153 / O#319-036).